The sequence spans 224 residues: ATP synthase subunit a (224 aa).

The next 6 membrane-spanning stretches (helical) occupy residues 17–37 (FSLN…IYWL), 72–92 (IFIS…FPYI), 99–119 (LTLT…YGWI), 125–145 (MFAH…MVCI), 166–186 (IAGH…SYIL), and 187–207 (VTFL…VAMI).

The protein belongs to the ATPase A chain family. As to quaternary structure, F-type ATPases have 2 components, CF(1) - the catalytic core - and CF(0) - the membrane proton channel. CF(1) has five subunits: alpha(3), beta(3), gamma(1), delta(1), epsilon(1). CF(0) has three main subunits: a, b and c.

The protein resides in the mitochondrion inner membrane. Its function is as follows. Mitochondrial membrane ATP synthase (F(1)F(0) ATP synthase or Complex V) produces ATP from ADP in the presence of a proton gradient across the membrane which is generated by electron transport complexes of the respiratory chain. F-type ATPases consist of two structural domains, F(1) - containing the extramembraneous catalytic core and F(0) - containing the membrane proton channel, linked together by a central stalk and a peripheral stalk. During catalysis, ATP synthesis in the catalytic domain of F(1) is coupled via a rotary mechanism of the central stalk subunits to proton translocation. Key component of the proton channel; it may play a direct role in the translocation of protons across the membrane. This Drosophila melanogaster (Fruit fly) protein is ATP synthase subunit a (mt:ATPase6).